A 465-amino-acid polypeptide reads, in one-letter code: Cysteine--tRNA ligase (465 aa).

Cys27 contributes to the Zn(2+) binding site. The 'HIGH' region signature appears at 29 to 39; the sequence is PTVYNFFHIGN. Cys207, His232, and Glu236 together coordinate Zn(2+). Residues 264–268 carry the 'KMSKS' region motif; the sequence is KMSKS. Lys267 is an ATP binding site.

This sequence belongs to the class-I aminoacyl-tRNA synthetase family. As to quaternary structure, monomer. It depends on Zn(2+) as a cofactor.

The protein resides in the cytoplasm. The catalysed reaction is tRNA(Cys) + L-cysteine + ATP = L-cysteinyl-tRNA(Cys) + AMP + diphosphate. This chain is Cysteine--tRNA ligase, found in Clostridium botulinum (strain Loch Maree / Type A3).